Reading from the N-terminus, the 125-residue chain is Photosystem I reaction center subunit IV, chloroplastic (125 aa).

A chloroplast-targeting transit peptide spans 1–34 (MASIASSVAVRLGLTQVLPNKNFSSPRSTRLVVR). Residues 42–57 (APAAASPEGEAPKAAA) show a composition bias toward low complexity. The interval 42–68 (APAAASPEGEAPKAAAKPPPIGPKRGS) is disordered.

Belongs to the PsaE family.

The protein resides in the plastid. It localises to the chloroplast thylakoid membrane. Its function is as follows. Stabilizes the interaction between PsaC and the PSI core, assists the docking of the ferredoxin to PSI and interacts with ferredoxin-NADP oxidoreductase. The sequence is that of Photosystem I reaction center subunit IV, chloroplastic (PSAE-1) from Spinacia oleracea (Spinach).